A 316-amino-acid chain; its full sequence is 4-hydroxy-3-methylbut-2-enyl diphosphate reductase (316 aa).

Residue cysteine 12 participates in [4Fe-4S] cluster binding. Positions 41 and 74 each coordinate (2E)-4-hydroxy-3-methylbut-2-enyl diphosphate. Dimethylallyl diphosphate is bound by residues histidine 41 and histidine 74. Histidine 41 and histidine 74 together coordinate isopentenyl diphosphate. Cysteine 96 is a [4Fe-4S] cluster binding site. Histidine 124 contributes to the (2E)-4-hydroxy-3-methylbut-2-enyl diphosphate binding site. Histidine 124 provides a ligand contact to dimethylallyl diphosphate. Histidine 124 contributes to the isopentenyl diphosphate binding site. Glutamate 126 acts as the Proton donor in catalysis. Threonine 169 lines the (2E)-4-hydroxy-3-methylbut-2-enyl diphosphate pocket. Cysteine 199 serves as a coordination point for [4Fe-4S] cluster. The (2E)-4-hydroxy-3-methylbut-2-enyl diphosphate site is built by serine 227, serine 228, asparagine 229, and serine 271. Positions 227, 228, 229, and 271 each coordinate dimethylallyl diphosphate. Residues serine 227, serine 228, asparagine 229, and serine 271 each contribute to the isopentenyl diphosphate site.

The protein belongs to the IspH family. [4Fe-4S] cluster is required as a cofactor.

The enzyme catalyses isopentenyl diphosphate + 2 oxidized [2Fe-2S]-[ferredoxin] + H2O = (2E)-4-hydroxy-3-methylbut-2-enyl diphosphate + 2 reduced [2Fe-2S]-[ferredoxin] + 2 H(+). It catalyses the reaction dimethylallyl diphosphate + 2 oxidized [2Fe-2S]-[ferredoxin] + H2O = (2E)-4-hydroxy-3-methylbut-2-enyl diphosphate + 2 reduced [2Fe-2S]-[ferredoxin] + 2 H(+). It participates in isoprenoid biosynthesis; dimethylallyl diphosphate biosynthesis; dimethylallyl diphosphate from (2E)-4-hydroxy-3-methylbutenyl diphosphate: step 1/1. It functions in the pathway isoprenoid biosynthesis; isopentenyl diphosphate biosynthesis via DXP pathway; isopentenyl diphosphate from 1-deoxy-D-xylulose 5-phosphate: step 6/6. Its function is as follows. Catalyzes the conversion of 1-hydroxy-2-methyl-2-(E)-butenyl 4-diphosphate (HMBPP) into a mixture of isopentenyl diphosphate (IPP) and dimethylallyl diphosphate (DMAPP). Acts in the terminal step of the DOXP/MEP pathway for isoprenoid precursor biosynthesis. In Xylella fastidiosa (strain M23), this protein is 4-hydroxy-3-methylbut-2-enyl diphosphate reductase.